The sequence spans 54 residues: Large ribosomal subunit protein bL32c (54 aa).

It belongs to the bacterial ribosomal protein bL32 family.

The protein resides in the plastid. Its subcellular location is the chloroplast. The protein is Large ribosomal subunit protein bL32c of Piper cenocladum (Ant piper).